The primary structure comprises 166 residues: Probable chemoreceptor glutamine deamidase CheD (166 aa).

The protein belongs to the CheD family.

The catalysed reaction is L-glutaminyl-[protein] + H2O = L-glutamyl-[protein] + NH4(+). In terms of biological role, probably deamidates glutamine residues to glutamate on methyl-accepting chemotaxis receptors (MCPs), playing an important role in chemotaxis. The sequence is that of Probable chemoreceptor glutamine deamidase CheD from Desulforamulus reducens (strain ATCC BAA-1160 / DSM 100696 / MI-1) (Desulfotomaculum reducens).